The chain runs to 561 residues: Putative transport protein YbjL (561 aa).

5 consecutive transmembrane segments (helical) span residues 8–28 (LLNG…LCLG), 32–52 (LGSV…LLGQ), 66–86 (FMLF…SIFF), 94–114 (MLAL…GKLF), and 158–178 (NLSL…IVGA). RCK C-terminal domains follow at residues 200 to 288 (RGLD…SLRN) and 292 to 373 (VFDR…RIGF). A run of 5 helical transmembrane segments spans residues 383-403 (LLAF…TFQF), 406-426 (FSFG…LGFL), 447-467 (FGLM…ISNG), 475-495 (MLIA…LFGA), and 540-560 (AIAN…WPGL).

Belongs to the AAE transporter (TC 2.A.81) family. YbjL subfamily.

The protein resides in the cell membrane. In Salmonella gallinarum (strain 287/91 / NCTC 13346), this protein is Putative transport protein YbjL.